Consider the following 940-residue polypeptide: MATTRSAGGAATSVDTGPAAGNSGIRKLSTASVGGIAGGVAPSWQSCYYCTREHFKSISDFVNHLRNRHCTREGGSFVCRYGFNGVCASLPLDGVSDRDYDAHVAKYHVNQHTREMPPEWGVYSAAQNLPAVLNDPSRGKQSNLFTKKWGEHFVERSHVPPSPRLPDITHADFTVYLGSIGKRYRWHERRQQQLERDKPLENGAQGAPGPGTGGQTPTHLSSVPEIFLKSQLQLHHPATFKQVFPNYMQTSASSPESHQQTGRQLQEQLSHYLDMVEVKIAQQVSQKSAAFFHAMTTQHAILAEMEQAADQVRQLRAALAELHSHSVVDSFKVLRFAQRRQHYNLTLDKLRLMATVHKTQPMLQLLLGTQDYVAALDLIGTTQEILSAELLGIHCFKHLPMQLSEMEKLIDKMLTTEFERYAAADLNRPLTDALRETDSVCAEEDKLVAIVMGLLRKQNFSFVQAYQQEAIATIRAIIKQLLIEVLARSDSDQEISLTGHGEQALELTLPEWIALLQRSSQALVSILERIKTVVGIMQQTADAAVGAQDAVNLIDSEAFLSPGHHEQLKNQLQQLLQAVCHYCHERCANIVSPQSLERSSASEQELFQLSEIVDHFGETTRSICGVASVPLQLALKVQASRYAQRFHSERKQKLSLLLDQERWRQVDIPHEFQRIIERMAAGDYAKPEMGNLISNGAGNPVLLVEGKQPYTLVSASLMLIRMLYEYGCSAHRLPLLASYHARNVVDLLRCFNSRSCQLIIGAGAMRVAGLKTITSTNLALVSRALQLVLWLLPKLKEHFQAMSGYETIERDYQGHIKEIENKIHGIVSERLAAQLDAWEARPPIPSQTFRHISRHLVKLHEAIAGVLPEAQIHEIYGVVHRNFKDKLREQLLKLNVNNNGGPQHGVVTSELTFYMETLRTLKALPAEQLDNGILEEIWLY.

Thr-30 carries the phosphothreonine modification. The interval 192-218 (QQLERDKPLENGAQGAPGPGTGGQTPT) is disordered. Residues 299–325 (HAILAEMEQAADQVRQLRAALAELHSH) adopt a coiled-coil conformation.

It belongs to the VPS54 family.

It localises to the golgi apparatus. Its subcellular location is the trans-Golgi network. In terms of biological role, may be involved in retrograde transport from early and late endosomes to late Golgi. Required during spermatogenesis for sperm individualization. The chain is Vacuolar protein sorting-associated protein 54 (scat) from Drosophila melanogaster (Fruit fly).